A 222-amino-acid polypeptide reads, in one-letter code: MWVKICGLQFMKDAVAAVEAGADALGFVFAPSRRQVTPERVEALISGLPPETVTVGVFVDAPMEEIRRAVTLSGLKAVQLHGSEPPEAIDQIGLPVIKAIRIRGPEDLARLPDYRNAAGLLLEPYVEGQAGGTGQTLDPTLVRWAAQTLERAGVPLAGPDEPLTPGRPKLILAGGLTPDNVADAIARAQPGGVDVSSGVENGGVKDINKIYAFVAAAKGVAR.

It belongs to the TrpF family.

The enzyme catalyses N-(5-phospho-beta-D-ribosyl)anthranilate = 1-(2-carboxyphenylamino)-1-deoxy-D-ribulose 5-phosphate. Its pathway is amino-acid biosynthesis; L-tryptophan biosynthesis; L-tryptophan from chorismate: step 3/5. In Symbiobacterium thermophilum (strain DSM 24528 / JCM 14929 / IAM 14863 / T), this protein is N-(5'-phosphoribosyl)anthranilate isomerase.